A 721-amino-acid polypeptide reads, in one-letter code: Mitogen-activated protein kinase 6 (721 aa).

Residue Met1 forms a Peptide (Met-Gly) (interchain with G-Cter in ubiquitin) linkage. The 297-residue stretch at 20-316 (YMDLKPLGCG…AEEALSHPYM (297 aa)) folds into the Protein kinase domain. ATP is bound by residues 26-34 (LGCGGNGLV) and Lys49. The active-site Proton acceptor is Asp152. Residue Ser189 is modified to Phosphoserine; by PAK1, PAK2 and PAK3. Residues 189–191 (SEG) carry the SEG motif motif. An FRIEDE motif motif is present at residues 332-337 (FHIEDE). A phosphoserine mark is found at Ser386, Ser452, Ser556, Ser558, Ser665, and Ser684. Polar residues predominate over residues 701 to 715 (AMKSSPQIPHQTYSS). The disordered stretch occupies residues 701–721 (AMKSSPQIPHQTYSSILKHLN).

The protein belongs to the protein kinase superfamily. CMGC Ser/Thr protein kinase family. MAP kinase subfamily. Heterodimer with ERK4/MAPK4. Interacts with (via FRIEDE motif) MAPKAPK5. Interacts with UBE3A; this interaction may be indirect and mediated by HERC2, possibly via HERC2 interaction with NEURL4. Requires Mg(2+) as cofactor. Post-translationally, phosphorylated at Ser-189 by PAK1, PAK2 and PAK3 resulting in catalytic activation. Phosphorylated by MAPKAPK5 at other sites. In terms of processing, ubiquitination at Met-1 leads to degradation by the proteasome pathway.

The protein resides in the cytoplasm. The protein localises to the nucleus. The enzyme catalyses L-seryl-[protein] + ATP = O-phospho-L-seryl-[protein] + ADP + H(+). It carries out the reaction L-threonyl-[protein] + ATP = O-phospho-L-threonyl-[protein] + ADP + H(+). Activated by phosphorylation at Ser-189. In terms of biological role, atypical MAPK protein. Phosphorylates microtubule-associated protein 2 (MAP2) and MAPKAPK5. The precise role of the complex formed with MAPKAPK5 is still unclear, but the complex follows a complex set of phosphorylation events: upon interaction with atypical MAPKAPK5, ERK3/MAPK6 is phosphorylated at Ser-189 and then mediates phosphorylation and activation of MAPKAPK5, which in turn phosphorylates ERK3/MAPK6. May promote entry in the cell cycle. This Pongo abelii (Sumatran orangutan) protein is Mitogen-activated protein kinase 6 (MAPK6).